A 505-amino-acid polypeptide reads, in one-letter code: Lysine--tRNA ligase (505 aa).

Residues E409 and E416 each coordinate Mg(2+).

Belongs to the class-II aminoacyl-tRNA synthetase family. In terms of assembly, homodimer. The cofactor is Mg(2+).

The protein resides in the cytoplasm. The catalysed reaction is tRNA(Lys) + L-lysine + ATP = L-lysyl-tRNA(Lys) + AMP + diphosphate. The chain is Lysine--tRNA ligase from Latilactobacillus sakei subsp. sakei (strain 23K) (Lactobacillus sakei subsp. sakei).